A 317-amino-acid polypeptide reads, in one-letter code: Beta-ketoacyl-[acyl-carrier-protein] synthase III (317 aa).

Residues Cys112 and His244 contribute to the active site. An ACP-binding region spans residues 245–249 (QANLR). The active site involves Asn274.

It belongs to the thiolase-like superfamily. FabH family. Homodimer.

It localises to the cytoplasm. It carries out the reaction malonyl-[ACP] + acetyl-CoA + H(+) = 3-oxobutanoyl-[ACP] + CO2 + CoA. Its pathway is lipid metabolism; fatty acid biosynthesis. Catalyzes the condensation reaction of fatty acid synthesis by the addition to an acyl acceptor of two carbons from malonyl-ACP. Catalyzes the first condensation reaction which initiates fatty acid synthesis and may therefore play a role in governing the total rate of fatty acid production. Possesses both acetoacetyl-ACP synthase and acetyl transacylase activities. Its substrate specificity determines the biosynthesis of branched-chain and/or straight-chain of fatty acids. The protein is Beta-ketoacyl-[acyl-carrier-protein] synthase III of Salmonella typhimurium (strain LT2 / SGSC1412 / ATCC 700720).